Reading from the N-terminus, the 333-residue chain is tRNA N6-adenosine threonylcarbamoyltransferase (333 aa).

The Fe cation site is built by histidine 118 and histidine 122. Residues 140–144, aspartate 173, glycine 186, and asparagine 274 contribute to the substrate site; that span reads VVSGG. A Fe cation-binding site is contributed by aspartate 298.

The protein belongs to the KAE1 / TsaD family. Fe(2+) serves as cofactor.

The protein resides in the cytoplasm. It carries out the reaction L-threonylcarbamoyladenylate + adenosine(37) in tRNA = N(6)-L-threonylcarbamoyladenosine(37) in tRNA + AMP + H(+). In terms of biological role, required for the formation of a threonylcarbamoyl group on adenosine at position 37 (t(6)A37) in tRNAs that read codons beginning with adenine. Is involved in the transfer of the threonylcarbamoyl moiety of threonylcarbamoyl-AMP (TC-AMP) to the N6 group of A37, together with TsaE and TsaB. TsaD likely plays a direct catalytic role in this reaction. This chain is tRNA N6-adenosine threonylcarbamoyltransferase, found in Deinococcus geothermalis (strain DSM 11300 / CIP 105573 / AG-3a).